The following is a 577-amino-acid chain: Urease subunit alpha (577 aa).

Residues 136–577 (GGIDCHVHFI…LPMAQRYFLF (442 aa)) enclose the Urease domain. Residues H141, H143, and K224 each contribute to the Ni(2+) site. The residue at position 224 (K224) is an N6-carboxylysine. Residue H226 participates in substrate binding. 2 residues coordinate Ni(2+): H253 and H279. H327 acts as the Proton donor in catalysis. D367 is a binding site for Ni(2+).

This sequence belongs to the metallo-dependent hydrolases superfamily. Urease alpha subunit family. Heterotrimer of UreA (gamma), UreB (beta) and UreC (alpha) subunits. Three heterotrimers associate to form the active enzyme. The cofactor is Ni cation. In terms of processing, carboxylation allows a single lysine to coordinate two nickel ions.

It is found in the cytoplasm. The enzyme catalyses urea + 2 H2O + H(+) = hydrogencarbonate + 2 NH4(+). The protein operates within nitrogen metabolism; urea degradation; CO(2) and NH(3) from urea (urease route): step 1/1. The chain is Urease subunit alpha from Mycobacteroides abscessus (strain ATCC 19977 / DSM 44196 / CCUG 20993 / CIP 104536 / JCM 13569 / NCTC 13031 / TMC 1543 / L948) (Mycobacterium abscessus).